Consider the following 293-residue polypeptide: 33 kDa chaperonin (293 aa).

2 disulfide bridges follow: Cys237–Cys239 and Cys271–Cys274.

It belongs to the HSP33 family. Post-translationally, under oxidizing conditions two disulfide bonds are formed involving the reactive cysteines. Under reducing conditions zinc is bound to the reactive cysteines and the protein is inactive.

The protein resides in the cytoplasm. Redox regulated molecular chaperone. Protects both thermally unfolding and oxidatively damaged proteins from irreversible aggregation. Plays an important role in the bacterial defense system toward oxidative stress. The sequence is that of 33 kDa chaperonin from Haemophilus influenzae (strain PittEE).